Here is a 245-residue protein sequence, read N- to C-terminus: Probable GTP-binding protein EngB (245 aa).

The 178-residue stretch at 46–223 folds into the EngB-type G domain; that stretch reads DVPEIAFVGR…AQHLWDWAHP (178 aa). GTP is bound by residues 54–61, 81–85, 103–106, 173–176, and 202–204; these read GRSNAGKS, GRTQS, DLPG, TKSD, and FSS. Residues serine 61 and threonine 83 each coordinate Mg(2+). The segment at 219 to 245 is disordered; the sequence is DWAHPPEKPAKKPKAEPAAEAATGDEG. The span at 222-235 shows a compositional bias: basic and acidic residues; it reads HPPEKPAKKPKAEP. Over residues 236–245 the composition is skewed to low complexity; the sequence is AAEAATGDEG.

It belongs to the TRAFAC class TrmE-Era-EngA-EngB-Septin-like GTPase superfamily. EngB GTPase family. Mg(2+) serves as cofactor.

Functionally, necessary for normal cell division and for the maintenance of normal septation. This Polaromonas sp. (strain JS666 / ATCC BAA-500) protein is Probable GTP-binding protein EngB.